We begin with the raw amino-acid sequence, 60 residues long: Protein translocase subunit SecE (60 aa).

Residues 1-31 (MFARLIRYFQEARAELARVTWPTREQVVEGT) are Cytoplasmic-facing. The chain crosses the membrane as a helical span at residues 32–52 (QAILLFTLAFMVILGLYDTVF). Residues 53 to 60 (RFLIGLLR) are Extracellular-facing.

The protein belongs to the SecE/SEC61-gamma family. Component of the Sec protein translocase complex. Heterotrimer consisting of SecY, SecE and SecG subunits. The heterotrimers can form oligomers, although 1 heterotrimer is thought to be able to translocate proteins. Interacts with SecDF, and other proteins may be involved. The channel interacts with SecA via subunit SecY.

It is found in the cell inner membrane. Functionally, essential subunit of the protein translocation channel SecYEG. Clamps together the 2 halves of SecY. May contact the channel plug during translocation. In Thermus thermophilus (strain ATCC 27634 / DSM 579 / HB8), this protein is Protein translocase subunit SecE.